Reading from the N-terminus, the 88-residue chain is N-alpha-acetyltransferase 38, NatC auxiliary subunit (88 aa).

Residues 1-72 (MDILKLSDFI…VKTIMIDKPV (72 aa)) form the Sm domain.

Component of the N-terminal acetyltransferase C (NatC) complex, composed of the catalytic subunit Naa30/MAK3, a large auxiliary subunit Naa35/MAK10 and a small auxiliary subunit Naa38/MAK31.

Functionally, component of the NatC N-terminal acetyltransferase, which associates with the ribosome to acetylate nascent protein chains in a cotranslational manner. NatC acetylates protein N-termini starting with methionine, followed by a hydrophobic or amphipathic amino acid, with amino acids at positions 3 and 4 also contributing to NatC recognition. The first 4 amino acids of cognate substrates are recognized at the Naa30/MAK3-Naa35/MAK10 interface. NatC-dependent acetylation targets various substrate proteins to specific subcellular sites, including isoform 2 of tRNA-specific methyltransferase Trm1 to the inner nuclear membrane. Catalyzes the acetylation of the N-terminal Met of ARF-like GTPase ARL3, which is required for its Golgi localization via interaction with the Golgi-localized integral membrane protein SYS1, which may serve as a receptor for acetylated ARL3. Catalyzes the acetylation of the N-terminal Met of L-A virus Gag protein. MAK31 is necessary for the structural stability of L-A double-stranded RNA-containing particles. Necessary for growth at 37 degrees Celsius as well as for maintenance of the killer plasmid. The polypeptide is N-alpha-acetyltransferase 38, NatC auxiliary subunit (MAK31) (Saccharomyces cerevisiae (strain ATCC 204508 / S288c) (Baker's yeast)).